We begin with the raw amino-acid sequence, 273 residues long: Homeobox protein Hox-C13b (273 aa).

Positions 201–260 (GRKKRVPYTKIQLKELEKEYAASKFITKDRRRRISATTSLSERQVTIWFQNRRVKEKKFV) form a DNA-binding region, homeobox.

Belongs to the Abd-B homeobox family.

It localises to the nucleus. In terms of biological role, sequence-specific transcription factor which is part of a developmental regulatory system that provides cells with specific positional identities on the anterior-posterior axis. Plays a role in early embryonic development. The chain is Homeobox protein Hox-C13b (hoxc13b) from Danio rerio (Zebrafish).